The following is a 135-amino-acid chain: Phosphoinositide-interacting protein (135 aa).

The segment at 1–21 (MEVLPKALEVDERSPESKDLL) is disordered. Residues 8–19 (LEVDERSPESKD) show a composition bias toward basic and acidic residues. The next 2 helical transmembrane spans lie at 54-74 (IIIM…TCVA) and 92-112 (PAFL…VPII).

In terms of assembly, interacts with TRPV1. Strongly expressed in most dorsal root ganglia (DRG) and trigeminal neurons. Expressed by most peptidergic (CGRP+) and non-peptidergic (IB4+) DRG neurons. Weakly expressed in other parts of the peripheral nervous system (PNS) including sympathetic and enteric neurons. Not expressed in the spinal cord.

The protein resides in the membrane. Its function is as follows. Regulatory subunit of TRPV1, a molecular sensor of noxious heat and capsaicin. Positively regulates TRPV1 channel activity via phosphatidylinositol 4,5-bisphosphate (PIP2). Binds various phosphoinositide, including phosphatidylinositol 4,5-bisphosphate (PIP2), but not phosphatidylinositol (PI). The polypeptide is Phosphoinositide-interacting protein (Pirt) (Mus musculus (Mouse)).